Reading from the N-terminus, the 754-residue chain is Phosphoribosylformylglycinamidine synthase subunit PurL (754 aa).

Positions 1–21 (MLDTVEHAATTPDQPQPYGEL) are disordered. The active site involves His-54. Tyr-57 and Lys-101 together coordinate ATP. Glu-103 contributes to the Mg(2+) binding site. Substrate contacts are provided by residues 104 to 107 (SHNH) and Arg-126. Catalysis depends on His-105, which acts as the Proton acceptor. Position 127 (Asp-127) interacts with Mg(2+). Gln-252 serves as a coordination point for substrate. A Mg(2+)-binding site is contributed by Asp-280. Residue 324 to 326 (ESQ) participates in substrate binding. Positions 512 and 549 each coordinate ATP. Residue Asn-550 coordinates Mg(2+). Ser-552 is a binding site for substrate.

It belongs to the FGAMS family. Monomer. Part of the FGAM synthase complex composed of 1 PurL, 1 PurQ and 2 PurS subunits.

The protein localises to the cytoplasm. The catalysed reaction is N(2)-formyl-N(1)-(5-phospho-beta-D-ribosyl)glycinamide + L-glutamine + ATP + H2O = 2-formamido-N(1)-(5-O-phospho-beta-D-ribosyl)acetamidine + L-glutamate + ADP + phosphate + H(+). It participates in purine metabolism; IMP biosynthesis via de novo pathway; 5-amino-1-(5-phospho-D-ribosyl)imidazole from N(2)-formyl-N(1)-(5-phospho-D-ribosyl)glycinamide: step 1/2. In terms of biological role, part of the phosphoribosylformylglycinamidine synthase complex involved in the purines biosynthetic pathway. Catalyzes the ATP-dependent conversion of formylglycinamide ribonucleotide (FGAR) and glutamine to yield formylglycinamidine ribonucleotide (FGAM) and glutamate. The FGAM synthase complex is composed of three subunits. PurQ produces an ammonia molecule by converting glutamine to glutamate. PurL transfers the ammonia molecule to FGAR to form FGAM in an ATP-dependent manner. PurS interacts with PurQ and PurL and is thought to assist in the transfer of the ammonia molecule from PurQ to PurL. The polypeptide is Phosphoribosylformylglycinamidine synthase subunit PurL (Mycobacterium bovis (strain ATCC BAA-935 / AF2122/97)).